We begin with the raw amino-acid sequence, 864 residues long: Mitochondrial 15S rRNA processing factor CCM1 (864 aa).

Residues methionine 1–arginine 76 constitute a mitochondrion transit peptide. Composition is skewed to polar residues over residues threonine 80–alanine 94 and asparagine 102–proline 112. The tract at residues threonine 80–serine 117 is disordered. PPR repeat units follow at residues asparagine 319–histidine 353 and aspartate 356–proline 390.

It belongs to the CCM1 family. In terms of assembly, binds to mitochondrial small subunit 15S rRNA.

Its subcellular location is the mitochondrion. Its function is as follows. Regulates mitochondrial small subunit maturation by controlling 15S rRNA 5'-end processing. Localizes to the 5' precursor of the 15S rRNA in a position that is subsequently occupied by mS47 in the mature yeast mtSSU. Uses structure and sequence-specific RNA recognition, binding to a single-stranded region of the precursor and specifically recognizing bases -6 to -1. The exchange of Ccm1 for mS47 is coupled to the irreversible removal of precursor rRNA that is accompanied by conformational changes of the mitoribosomal proteins uS5m and mS26. These conformational changes signal completion of 5'-end rRNA processing through protection of the mature 5'-end of the 15S rRNA and stabilization of mS47. The removal of the 5' precursor together with the dissociation of Ccm1 may be catalyzed by the 5'-3' exoribonuclease Pet127. Involved in the specific removal of group I introns in mitochondrial encoded transcripts. In Saccharomyces cerevisiae (strain ATCC 204508 / S288c) (Baker's yeast), this protein is Mitochondrial 15S rRNA processing factor CCM1.